Reading from the N-terminus, the 276-residue chain is 2-hydroxy-6-oxo-2,4-heptadienoate hydrolase (276 aa).

Residues 28-259 form the AB hydrolase-1 domain; the sequence is NPVVLVHGSG…GRCGHWVQIE (232 aa). Residues Ser-105, Asp-226, and His-254 contribute to the active site.

Belongs to the DmpD/TodF/XylF esterase family.

The catalysed reaction is (2Z,4E)-2-hydroxy-6-oxohepta-2,4-dienoate + H2O = (2Z)-2-hydroxypenta-2,4-dienoate + acetate + H(+). The protein operates within xenobiotic degradation; toluene degradation. In terms of biological role, catalyzes the hydrolysis of 2-hydroxy-6-oxohepta-2,4-dienoate into 2-hydroxypenta-2,4-dienoate and acetate. This chain is 2-hydroxy-6-oxo-2,4-heptadienoate hydrolase (todF), found in Pseudomonas putida (strain ATCC 700007 / DSM 6899 / JCM 31910 / BCRC 17059 / LMG 24140 / F1).